The chain runs to 200 residues: Small ribosomal subunit protein mS38 (200 aa).

The protein belongs to the mitochondrion-specific ribosomal protein mS38 family. As to quaternary structure, component of the mitochondrial ribosome small subunit (28S) which comprises a 12S rRNA and about 30 distinct proteins. Interacts with Aurora-A. Ubiquitously expressed and especially highly expressed in heart, skeletal muscle and testis.

The protein localises to the mitochondrion matrix. It localises to the nucleus. Functionally, may act as a negative regulator of Aurora-A kinase, by down-regulation through proteasome-dependent degradation. The protein is Small ribosomal subunit protein mS38 (Aurkaip1) of Mus musculus (Mouse).